The sequence spans 156 residues: MPKESGRKVVATNRKARHEYHLGDTYEAGLALMGTEVKSLREGRANLTDGFATFYGDELWLEAVYIPEYLNGSWNNHSARRRRKLLLHRAELIKISHKTREAGFTLVPLQLYFLDGKAKVEIALAKGKRDYDKRQALREAQDTRESLRAMREKNLG.

The protein belongs to the SmpB family.

The protein localises to the cytoplasm. Required for rescue of stalled ribosomes mediated by trans-translation. Binds to transfer-messenger RNA (tmRNA), required for stable association of tmRNA with ribosomes. tmRNA and SmpB together mimic tRNA shape, replacing the anticodon stem-loop with SmpB. tmRNA is encoded by the ssrA gene; the 2 termini fold to resemble tRNA(Ala) and it encodes a 'tag peptide', a short internal open reading frame. During trans-translation Ala-aminoacylated tmRNA acts like a tRNA, entering the A-site of stalled ribosomes, displacing the stalled mRNA. The ribosome then switches to translate the ORF on the tmRNA; the nascent peptide is terminated with the 'tag peptide' encoded by the tmRNA and targeted for degradation. The ribosome is freed to recommence translation, which seems to be the essential function of trans-translation. This Renibacterium salmoninarum (strain ATCC 33209 / DSM 20767 / JCM 11484 / NBRC 15589 / NCIMB 2235) protein is SsrA-binding protein.